Reading from the N-terminus, the 104-residue chain is uncharacterized protein (104 aa).

A run of 2 helical transmembrane segments spans residues 16–36 (LAFF…LASY) and 44–64 (GGFG…FLCI).

The protein resides in the cell membrane. This is an uncharacterized protein from Bacillus anthracis.